A 294-amino-acid polypeptide reads, in one-letter code: NAD kinase (294 aa).

Residue Asp-74 is the Proton acceptor of the active site. NAD(+)-binding positions include Asp-74–Gly-75, Asn-148–Glu-149, His-159, Arg-176, Asp-178, Thr-189–Ser-194, and Gln-249.

This sequence belongs to the NAD kinase family. It depends on a divalent metal cation as a cofactor.

The protein localises to the cytoplasm. The catalysed reaction is NAD(+) + ATP = ADP + NADP(+) + H(+). Its function is as follows. Involved in the regulation of the intracellular balance of NAD and NADP, and is a key enzyme in the biosynthesis of NADP. Catalyzes specifically the phosphorylation on 2'-hydroxyl of the adenosine moiety of NAD to yield NADP. The chain is NAD kinase from Vibrio atlanticus (strain LGP32) (Vibrio splendidus (strain Mel32)).